We begin with the raw amino-acid sequence, 110 residues long: UPF0060 membrane protein BPSL1340 (110 aa).

The next 4 helical transmembrane spans lie at 9 to 29 (ALFV…WLVL), 34 to 54 (PAWL…LLTL), 64 to 84 (AAYG…VDGV), and 86 to 106 (LSRW…VIAL).

Belongs to the UPF0060 family.

The protein resides in the cell inner membrane. This is UPF0060 membrane protein BPSL1340 from Burkholderia pseudomallei (strain K96243).